The following is a 295-amino-acid chain: Shikimate dehydrogenase (NADP(+)) (295 aa).

Shikimate is bound by residues 24–26 (SRS) and Thr-71. Lys-75 (proton acceptor) is an active-site residue. NADP(+) is bound at residue Glu-87. 2 residues coordinate shikimate: Asn-96 and Asp-111. Residues 136–140 (GAGGA), 160–165 (NRTASR), and Met-233 each bind NADP(+). Shikimate is bound at residue Tyr-235. Gly-256 provides a ligand contact to NADP(+).

It belongs to the shikimate dehydrogenase family. In terms of assembly, homodimer.

The enzyme catalyses shikimate + NADP(+) = 3-dehydroshikimate + NADPH + H(+). Its pathway is metabolic intermediate biosynthesis; chorismate biosynthesis; chorismate from D-erythrose 4-phosphate and phosphoenolpyruvate: step 4/7. Functionally, involved in the biosynthesis of the chorismate, which leads to the biosynthesis of aromatic amino acids. Catalyzes the reversible NADPH linked reduction of 3-dehydroshikimate (DHSA) to yield shikimate (SA). The chain is Shikimate dehydrogenase (NADP(+)) from Cupriavidus necator (strain ATCC 17699 / DSM 428 / KCTC 22496 / NCIMB 10442 / H16 / Stanier 337) (Ralstonia eutropha).